The following is an 884-amino-acid chain: uncharacterized protein (884 aa).

This is an uncharacterized protein from Mycobacterium bovis (strain ATCC BAA-935 / AF2122/97).